A 594-amino-acid polypeptide reads, in one-letter code: Glutamate decarboxylase 1 (594 aa).

The span at 1-13 (MASSTPSSSATSS) shows a compositional bias: low complexity. Residues 1–23 (MASSTPSSSATSSNAGADPNTTN) form a disordered region. Residue serine 78 is modified to Phosphoserine. 190–192 (QLS) is a binding site for 4-aminobutanoate. At lysine 405 the chain carries N6-(pyridoxal phosphate)lysine. Arginine 567 serves as a coordination point for 4-aminobutanoate.

The protein belongs to the group II decarboxylase family. Homodimer. Pyridoxal 5'-phosphate serves as cofactor.

It carries out the reaction L-glutamate + H(+) = 4-aminobutanoate + CO2. In terms of biological role, catalyzes the synthesis of the inhibitory neurotransmitter gamma-aminobutyric acid (GABA) with pyridoxal 5'-phosphate as cofactor. The chain is Glutamate decarboxylase 1 (GAD1) from Pan troglodytes (Chimpanzee).